A 470-amino-acid chain; its full sequence is Glutamate--tRNA ligase (470 aa).

A 'HIGH' region motif is present at residues 9-19 (PSPTGFLHVGG). Residues 236 to 240 (RLSKR) carry the 'KMSKS' region motif. Residue Lys239 coordinates ATP.

This sequence belongs to the class-I aminoacyl-tRNA synthetase family. Glutamate--tRNA ligase type 1 subfamily. As to quaternary structure, monomer.

The protein localises to the cytoplasm. It carries out the reaction tRNA(Glu) + L-glutamate + ATP = L-glutamyl-tRNA(Glu) + AMP + diphosphate. Catalyzes the attachment of glutamate to tRNA(Glu) in a two-step reaction: glutamate is first activated by ATP to form Glu-AMP and then transferred to the acceptor end of tRNA(Glu). The chain is Glutamate--tRNA ligase from Legionella pneumophila (strain Paris).